A 154-amino-acid polypeptide reads, in one-letter code: Endoribonuclease YbeY (154 aa).

3 residues coordinate Zn(2+): His113, His117, and His123.

Belongs to the endoribonuclease YbeY family. Requires Zn(2+) as cofactor.

The protein resides in the cytoplasm. Single strand-specific metallo-endoribonuclease involved in late-stage 70S ribosome quality control and in maturation of the 3' terminus of the 16S rRNA. This is Endoribonuclease YbeY from Vibrio cholerae serotype O1 (strain ATCC 39541 / Classical Ogawa 395 / O395).